Reading from the N-terminus, the 209-residue chain is Probable GTP-binding protein EngB (209 aa).

The region spanning 22–198 is the EngB-type G domain; it reads TPLEIAFVGR…NRTVGSWFDA (177 aa). S37 and T59 together coordinate Mg(2+).

Belongs to the TRAFAC class TrmE-Era-EngA-EngB-Septin-like GTPase superfamily. EngB GTPase family. The cofactor is Mg(2+).

Necessary for normal cell division and for the maintenance of normal septation. The sequence is that of Probable GTP-binding protein EngB from Neisseria gonorrhoeae (strain ATCC 700825 / FA 1090).